A 317-amino-acid chain; its full sequence is MAETEAGLEVEEPTEDDTLPSDTVSLSDSDSDLSLPSGVEVQALSPERLSGESQEDSGPDDPPSHPTGIPTTAVQPFHLRGMSSTFSQRSHSIFDCLESAARQEPCSAPQTSVVDNCSFKRPVAPPSQTPARSLSRVHGNTDPTRVHPVPDYVSHPERWTKYSLEDVSETSEQSNRDAALAFLSSRSQASPTDYVPFFNQDPSSCGEGRVVFTKPVRGSEARAERKRVLKKGVVSGAGGEASVELAHLAGPEAEEWSGHQGQPEVVVPSEAARPESSSGPIGMKTVGFHGSKKRSRDHFRNRDSNPEGPGSERGPSV.

Residues 1–19 (MAETEAGLEVEEPTEDDTL) are compositionally biased toward acidic residues. Residues 1–78 (MAETEAGLEV…IPTTAVQPFH (78 aa)) are disordered. The segment covering 20-37 (PSDTVSLSDSDSDLSLPS) has biased composition (low complexity). 4 positions are modified to phosphoserine: Ser57, Ser64, Ser83, and Ser92. The hom2; mediates interaction with the U5 snRNP complexes and required for spliceosomal tri-snRNP complex assembly stretch occupies residues 74-101 (VQPFHLRGMSSTFSQRSHSIFDCLESAA). Residues 123 to 151 (VAPPSQTPARSLSRVHGNTDPTRVHPVPD) form a disordered region. Residues 146–300 (VHPVPDYVSH…SKKRSRDHFR (155 aa)) are interaction with SNRNP200. The segment at 147 to 183 (HPVPDYVSHPERWTKYSLEDVSETSEQSNRDAALAFL) is hom3; mediates interaction with the U5 snRNP complexes. Residues 198-238 (FNQDPSSCGEGRVVFTKPVRGSEARAERKRVLKKGVVSGAG) are hom4; necessary for interaction with the PRPF19 complex and required for spliceosomal tri-snRNP complex assembly. N6-acetyllysine is present on Lys214. The disordered stretch occupies residues 247–317 (HLAGPEAEEW…GPGSERGPSV (71 aa)).

Belongs to the TSSC4 family. Interacts in a RNA-independent manner with distinct U5 snRNP-containing complexes, the mono-U5 snRNP and the post-splicing U5 snRNP-PRPF19 complex. Interacts with SNRNP200; the interaction is direct, excludes recruitment of C9ORF78 and WBP4 to SNRNP200 and negatively regulates its RNA helicase activity. Interacts with PRPF8; the interaction is direct.

Its subcellular location is the nucleus. It localises to the cytoplasm. In terms of biological role, protein associated with the U5 snRNP, during its maturation and its post-splicing recycling and which is required for spliceosomal tri-snRNP complex assembly in the nucleus. Has a molecular sequestering activity and transiently hinders SNRNP200 binding sites for constitutive splicing factors that intervene later during the assembly of the spliceosome and splicing. Together with its molecular sequestering activity, may also function as a molecular adapter and placeholder, coordinating the assembly of the U5 snRNP and its association with the U4/U6 di-snRNP. The chain is U5 small nuclear ribonucleoprotein TSSC4 from Rattus norvegicus (Rat).